The following is a 381-amino-acid chain: Galactose-1-phosphate uridylyltransferase (381 aa).

2 residues coordinate Zn(2+): C65 and C68. Residue 90-91 (ND) coordinates UDP-alpha-D-glucose. Zn(2+) is bound at residue H131. N175 is a UDP-alpha-D-glucose binding site. H186 contributes to the Zn(2+) binding site. Catalysis depends on H188, which acts as the Tele-UMP-histidine intermediate. Q190 is a UDP-alpha-D-glucose binding site. Positions 204, 306, 323, and 325 each coordinate Fe cation. Residues 338–341 (KFMV) and 343–344 (FE) contribute to the UDP-alpha-D-glucose site.

The protein belongs to the galactose-1-phosphate uridylyltransferase type 1 family. Homodimer. The cofactor is Zn(2+).

It catalyses the reaction alpha-D-galactose 1-phosphate + UDP-alpha-D-glucose = alpha-D-glucose 1-phosphate + UDP-alpha-D-galactose. It participates in carbohydrate metabolism; galactose metabolism. This Cryptococcus neoformans var. neoformans serotype D (strain B-3501A) (Filobasidiella neoformans) protein is Galactose-1-phosphate uridylyltransferase (GAL7).